The chain runs to 294 residues: 4-hydroxy-tetrahydrodipicolinate synthase (294 aa).

T44 contacts pyruvate. Catalysis depends on Y132, which acts as the Proton donor/acceptor. The active-site Schiff-base intermediate with substrate is K161. I206 is a pyruvate binding site.

This sequence belongs to the DapA family. As to quaternary structure, homotetramer; dimer of dimers.

Its subcellular location is the cytoplasm. It catalyses the reaction L-aspartate 4-semialdehyde + pyruvate = (2S,4S)-4-hydroxy-2,3,4,5-tetrahydrodipicolinate + H2O + H(+). It participates in amino-acid biosynthesis; L-lysine biosynthesis via DAP pathway; (S)-tetrahydrodipicolinate from L-aspartate: step 3/4. Its function is as follows. Catalyzes the condensation of (S)-aspartate-beta-semialdehyde [(S)-ASA] and pyruvate to 4-hydroxy-tetrahydrodipicolinate (HTPA). The polypeptide is 4-hydroxy-tetrahydrodipicolinate synthase (Thermotoga petrophila (strain ATCC BAA-488 / DSM 13995 / JCM 10881 / RKU-1)).